The chain runs to 118 residues: Large ribosomal subunit protein bL20 (118 aa).

The protein belongs to the bacterial ribosomal protein bL20 family.

Its function is as follows. Binds directly to 23S ribosomal RNA and is necessary for the in vitro assembly process of the 50S ribosomal subunit. It is not involved in the protein synthesizing functions of that subunit. In Campylobacter concisus (strain 13826), this protein is Large ribosomal subunit protein bL20.